Reading from the N-terminus, the 183-residue chain is Adenine phosphoribosyltransferase (183 aa).

The protein belongs to the purine/pyrimidine phosphoribosyltransferase family. As to quaternary structure, homodimer.

It localises to the cytoplasm. The enzyme catalyses AMP + diphosphate = 5-phospho-alpha-D-ribose 1-diphosphate + adenine. The protein operates within purine metabolism; AMP biosynthesis via salvage pathway; AMP from adenine: step 1/1. Catalyzes a salvage reaction resulting in the formation of AMP, that is energically less costly than de novo synthesis. This chain is Adenine phosphoribosyltransferase, found in Cronobacter sakazakii (strain ATCC BAA-894) (Enterobacter sakazakii).